Reading from the N-terminus, the 392-residue chain is Proteasomal ATPase-associated factor 1 (392 aa).

Residue A2 is modified to N-acetylalanine. WD repeat units follow at residues 90–129, 132–171, 174–215, 278–316, and 360–392; these read IHTK…LRRV, GHVF…CVVT, GHKG…GVIA, IGSD…TPVQ, and ADCD…LSDL.

Belongs to the WD repeat PAAF1/RPN14 family. As to quaternary structure, interacts with PSMC1, PSMC2, PSMC3, PSMC4, PSMC5 and PSMC6. Interacts with SUPT6H.

Its function is as follows. Inhibits proteasome 26S assembly and activity by impairing the association of the 19S regulatory complex with the 20S core. Protects SUPT6H from proteasomal degradation. The protein is Proteasomal ATPase-associated factor 1 (PAAF1) of Bos taurus (Bovine).